Here is a 141-residue protein sequence, read N- to C-terminus: Putative pre-16S rRNA nuclease (141 aa).

Belongs to the YqgF nuclease family.

It localises to the cytoplasm. Could be a nuclease involved in processing of the 5'-end of pre-16S rRNA. This chain is Putative pre-16S rRNA nuclease, found in Coxiella burnetii (strain RSA 331 / Henzerling II).